We begin with the raw amino-acid sequence, 158 residues long: Cyclic pyranopterin monophosphate synthase (158 aa).

Residues 76-78 and 114-115 contribute to the substrate site; these read LCH and ME. Asp129 is an active-site residue.

It belongs to the MoaC family. Homohexamer; trimer of dimers.

The catalysed reaction is (8S)-3',8-cyclo-7,8-dihydroguanosine 5'-triphosphate = cyclic pyranopterin phosphate + diphosphate. Its pathway is cofactor biosynthesis; molybdopterin biosynthesis. In terms of biological role, catalyzes the conversion of (8S)-3',8-cyclo-7,8-dihydroguanosine 5'-triphosphate to cyclic pyranopterin monophosphate (cPMP). The sequence is that of Cyclic pyranopterin monophosphate synthase from Shewanella piezotolerans (strain WP3 / JCM 13877).